The sequence spans 364 residues: Histidinol-phosphate aminotransferase (364 aa).

Lys226 bears the N6-(pyridoxal phosphate)lysine mark.

Belongs to the class-II pyridoxal-phosphate-dependent aminotransferase family. Histidinol-phosphate aminotransferase subfamily. In terms of assembly, homodimer. It depends on pyridoxal 5'-phosphate as a cofactor.

It carries out the reaction L-histidinol phosphate + 2-oxoglutarate = 3-(imidazol-4-yl)-2-oxopropyl phosphate + L-glutamate. Its pathway is amino-acid biosynthesis; L-histidine biosynthesis; L-histidine from 5-phospho-alpha-D-ribose 1-diphosphate: step 7/9. The polypeptide is Histidinol-phosphate aminotransferase (Campylobacter jejuni subsp. doylei (strain ATCC BAA-1458 / RM4099 / 269.97)).